A 459-amino-acid chain; its full sequence is MLRTEWIARRHGHANVSQMYYARQGLITEEVAYVAHRENLEPELVRSEVARGRLIIPANTNHPNLEPMGIGIATRCKVNANIGASPNASNLGEEVAKLELAVKYGADTVMDLSTGGGDLDAIRSAIIQASPVPIGTVPMYQALEAVHGNVEKLTPEHILDVIEKHAKQGVDYMTIHAGILIEHLPLTQGRLTGIVSRGGGILARWMLAHHKQNPLYTHFDEIINIFKKYDVSFSLGDSLRPGCQHDASDAAQFAELKTLGELTRRAWTHDVQVMVEGPGHVPMHQIEMNVRKQMQECSEAPFYVLGPLVTDIAPGYDHITSAIGAALAGWYGTAMLCYVTPKEHLGLPNAEDVRTGLIAYKIAAHAADIARGRPGARDRDDELSRARYNFDWNRQFELSLDPERAREYHDETLPADIYKSAEFCSMCGPKFCPMQTKIDSQALSELEAALKPQPVAAQE.

Substrate is bound by residues Asn-81, Met-110, Tyr-140, His-176, 196–198 (SRG), 237–240 (DSLR), and Glu-276. His-280 is a binding site for Zn(2+). Tyr-303 is a substrate binding site. His-344 contributes to the Zn(2+) binding site. Residues Cys-424, Cys-427, and Cys-432 each coordinate [4Fe-4S] cluster.

The protein belongs to the ThiC family. [4Fe-4S] cluster serves as cofactor.

The enzyme catalyses 5-amino-1-(5-phospho-beta-D-ribosyl)imidazole + S-adenosyl-L-methionine = 4-amino-2-methyl-5-(phosphooxymethyl)pyrimidine + CO + 5'-deoxyadenosine + formate + L-methionine + 3 H(+). It participates in cofactor biosynthesis; thiamine diphosphate biosynthesis. Functionally, catalyzes the synthesis of the hydroxymethylpyrimidine phosphate (HMP-P) moiety of thiamine from aminoimidazole ribotide (AIR) in a radical S-adenosyl-L-methionine (SAM)-dependent reaction. The protein is Phosphomethylpyrimidine synthase of Gloeobacter violaceus (strain ATCC 29082 / PCC 7421).